The following is a 209-amino-acid chain: C-type lectin domain family 6 member A (209 aa).

The Cytoplasmic segment spans residues 1–20 (MVQERQSQGKGVCWTLRLWS). The chain crosses the membrane as a helical; Signal-anchor for type II membrane protein span at residues 21 to 43 (AAVISMLLLSTCFIASCVVTYQF). Over 44–209 (IMDQPSRRLY…SICEMKKIYL (166 aa)) the chain is Extracellular. 4 cysteine pairs are disulfide-bonded: Cys64/Cys78, Cys79/Cys90, Cys107/Cys202, and Cys176/Cys194. The region spanning 86-203 (FGSSCYLIST…CDSKHNSICE (118 aa)) is the C-type lectin domain. Ca(2+)-binding residues include Val116, Asn118, and Glu122. The N-linked (GlcNAc...) asparagine glycan is linked to Asn131. Ca(2+)-binding residues include Glu168, Asn170, and Glu174. Alpha-D-mannopyranose-binding positions include 168–170 (EPN), Glu174, Trp182, and 190–191 (ND). Ca(2+) contacts are provided by Asn190, Asp191, and Glu203.

In terms of assembly, associated with FCER1G. Heterodimer with CLEC4D; this heterodimer forms a pattern recognition receptor (PRR) against fungal infection. As to expression, expressed by the XS52 DC (dendritic cell) line (at protein level). Expressed constitutively by the epidermis, and skin resident DC appear to be the major source of this expression. Expressed in the spleen and thymus. Expression was undetectable in non-DC lines, including macrophage lines (J774 and Raw), T-cell lines (7-17, HDK-1, and D10), B-cell hybridoma (5C5), a keratinocyte line (Pam 212), and a fibroblast line (NS01).

It localises to the cell membrane. Functionally, calcium-dependent lectin that acts as a pattern recognition receptor (PRR) of the innate immune system: specifically recognizes and binds alpha-mannans on C.albicans hypheas. Binding of C.albicans alpha-mannans to this receptor complex leads to phosphorylation of the immunoreceptor tyrosine-based activation motif (ITAM) of FCER1G, triggering activation of SYK, CARD9 and NF-kappa-B, consequently driving maturation of antigen-presenting cells and shaping antigen-specific priming of T-cells toward effector T-helper 1 and T-helper 17 cell subtypes. Also recognizes, in a mannose-dependent manner, allergens from house dust mite and fungi, by promoting cysteinyl leukotriene production. Recognizes soluble elements from the eggs of Shistosoma mansoni altering adaptive immune responses. This is C-type lectin domain family 6 member A from Mus musculus (Mouse).